We begin with the raw amino-acid sequence, 507 residues long: ATP synthase subunit alpha (507 aa).

171–178 lines the ATP pocket; the sequence is GDRQTGKT.

The protein belongs to the ATPase alpha/beta chains family. As to quaternary structure, F-type ATPases have 2 components, CF(1) - the catalytic core - and CF(0) - the membrane proton channel. CF(1) has five subunits: alpha(3), beta(3), gamma(1), delta(1), epsilon(1). CF(0) has three main subunits: a(1), b(2) and c(9-12). The alpha and beta chains form an alternating ring which encloses part of the gamma chain. CF(1) is attached to CF(0) by a central stalk formed by the gamma and epsilon chains, while a peripheral stalk is formed by the delta and b chains.

It localises to the cell inner membrane. It catalyses the reaction ATP + H2O + 4 H(+)(in) = ADP + phosphate + 5 H(+)(out). Produces ATP from ADP in the presence of a proton gradient across the membrane. The alpha chain is a regulatory subunit. This chain is ATP synthase subunit alpha, found in Bdellovibrio bacteriovorus (strain ATCC 15356 / DSM 50701 / NCIMB 9529 / HD100).